We begin with the raw amino-acid sequence, 290 residues long: Light-independent protochlorophyllide reductase iron-sulfur ATP-binding protein (290 aa).

ATP-binding positions include 10–15 and lysine 39; that span reads GIGKST. Mg(2+) is bound at residue serine 14. [4Fe-4S] cluster contacts are provided by cysteine 95 and cysteine 129. 180 to 181 is a binding site for ATP; the sequence is NR.

Belongs to the NifH/BchL/ChlL family. Homodimer. Protochlorophyllide reductase is composed of three subunits; ChlL, ChlN and ChlB. [4Fe-4S] cluster serves as cofactor.

The protein resides in the plastid. The protein localises to the chloroplast. It catalyses the reaction chlorophyllide a + oxidized 2[4Fe-4S]-[ferredoxin] + 2 ADP + 2 phosphate = protochlorophyllide a + reduced 2[4Fe-4S]-[ferredoxin] + 2 ATP + 2 H2O. Its pathway is porphyrin-containing compound metabolism; chlorophyll biosynthesis (light-independent). Component of the dark-operative protochlorophyllide reductase (DPOR) that uses Mg-ATP and reduced ferredoxin to reduce ring D of protochlorophyllide (Pchlide) to form chlorophyllide a (Chlide). This reaction is light-independent. The L component serves as a unique electron donor to the NB-component of the complex, and binds Mg-ATP. This Cycas taitungensis (Prince sago) protein is Light-independent protochlorophyllide reductase iron-sulfur ATP-binding protein.